Reading from the N-terminus, the 571-residue chain is Dual specificity testis-specific protein kinase 2 (571 aa).

A Protein kinase domain is found at 58–313; it reads DFTCEKIGSG…EIGKTLEEIL (256 aa). ATP is bound by residues 64–72 and lysine 87; that span reads IGSGFFSEV. The active-site Proton acceptor is aspartate 176. Residue serine 219 is modified to Phosphoserine; by autocatalysis. Phosphoserine is present on residues serine 369, serine 456, and serine 460. Positions 521–571 are disordered; that stretch reads ENGFGSRPQGTSPCPAGASEEMEVEERPAGSTPATFSTSGIGLQTQGKQDG. The span at 552-571 shows a compositional bias: polar residues; sequence TPATFSTSGIGLQTQGKQDG.

Belongs to the protein kinase superfamily. TKL Ser/Thr protein kinase family. Requires Mg(2+) as cofactor. The cofactor is Mn(2+). As to expression, predominantly expressed in testis and prostate. Found predominantly in non-germinal Sertoli cells.

The protein resides in the nucleus. It carries out the reaction L-seryl-[protein] + ATP = O-phospho-L-seryl-[protein] + ADP + H(+). It catalyses the reaction L-threonyl-[protein] + ATP = O-phospho-L-threonyl-[protein] + ADP + H(+). The catalysed reaction is L-tyrosyl-[protein] + ATP = O-phospho-L-tyrosyl-[protein] + ADP + H(+). Activated by autophosphorylation on Ser-219. Its function is as follows. Dual specificity protein kinase activity catalyzing autophosphorylation and phosphorylation of exogenous substrates on both serine/threonine and tyrosine residues. Phosphorylates cofilin at 'Ser-3'. May play an important role in spermatogenesis. The chain is Dual specificity testis-specific protein kinase 2 (TESK2) from Homo sapiens (Human).